Reading from the N-terminus, the 217-residue chain is MMAAGPRTSLLLAFALLCLPWTQMVGAFPAMSLSGLFANAVLRAQHLHQLAADTFKEFERTYIPEGQRYSIQNTQVAFCFSETIPAPTGKNEAQQKSDLELLRISLLLIQSWLGPLQFLSRVFSNSLVFGTSDRVYEKLKDLEEGILALMRELEDGTPRAGQILKQTYDKFDTNMRSDDALLKNYGLLSCFRKDLHKTETYLRVMKCRRFGEASCAF.

Positions 1–27 (MMAAGPRTSLLLAFALLCLPWTQMVGA) are cleaved as a signal peptide. His-46 contacts Zn(2+). Residues Cys-79 and Cys-190 are joined by a disulfide bond. At Ser-132 the chain carries Phosphoserine. Position 199 (Glu-199) interacts with Zn(2+). A disulfide bridge connects residues Cys-207 and Cys-215.

It belongs to the somatotropin/prolactin family.

The protein localises to the secreted. In terms of biological role, plays an important role in growth control. Its major role in stimulating body growth is to stimulate the liver and other tissues to secrete IGF1. It stimulates both the differentiation and proliferation of myoblasts. It also stimulates amino acid uptake and protein synthesis in muscle and other tissues. The chain is Somatotropin (GH1) from Giraffa camelopardalis (Giraffe).